Reading from the N-terminus, the 340-residue chain is MIDRTELSKFGITTQLSVIGRNPDEQSGFVNPPLYKGSTIILKKLSDLEQRKGRFYGTAGSPTIDNLENAWTHLTGGAGTVLSASGLGSISLALLALSKAGDHILMTDSVYVPTRMLCDGLLAKFGVETDYYDPSIGKDIEKLVKPNTTVIFLESPGSGTMEVQDIPALVSVAKKHGIKTILDNTWATPLFFDAHAHGIDISVEAGTKYLGGHSDLLIGLASANEECWPLLRSTYDAMAMLPGAEDCQLALRGMRTLHLRLKEVERKALDLAAWLGNRDEVEKVLHPAFEDCPGHEYWVRDYKGSSGLFSIVLKNGFTRAGLEKMVEGMKVLQLGFSWGG.

Position 208 is an N6-(pyridoxal phosphate)lysine (Lys208).

The protein belongs to the trans-sulfuration enzymes family. It depends on pyridoxal 5'-phosphate as a cofactor.

The catalysed reaction is L,L-cystathionine + H2O = L-homocysteine + pyruvate + NH4(+). It carries out the reaction an S-substituted L-cysteine + H2O = a thiol + pyruvate + NH4(+). The protein operates within amino-acid biosynthesis; L-methionine biosynthesis via de novo pathway; L-homocysteine from L-cystathionine: step 1/1. This Saccharomyces cerevisiae (strain ATCC 204508 / S288c) (Baker's yeast) protein is Putative cystathionine beta-lyase (IRC7).